The sequence spans 257 residues: Transcription factor GHD7 (257 aa).

Serine 68 bears the Phosphoserine; by CK1 mark. Residues 190–232 (REAKLMRYKEKRKKRCYEKQIRYASRKAYAEMRPRVRGRFAKE) enclose the CCT domain. The Nuclear localization signal signature appears at 198–204 (KEKRKKR). A disordered region spans residues 226–245 (RGRFAKEPDQEAVAPPSTYV).

As to quaternary structure, interacts with HD16/EL1. Phosphorylated at Ser-68 by HD16/EL1, a casein kinase 1. As to expression, expressed in the apical meristem, developing leaves, leaf sheaths of young seedling, root meristem, epidermal layer of developing stems and branch-primordia of developing panicles.

Its subcellular location is the nucleus. Functionally, probable transcription factor involved in the regulation of flowering time under long day (LD) conditions. Plays a major role as repressor of flowering. Controls flowering time by negatively regulating the expression of EHD1 and HD3A. The chain is Transcription factor GHD7 from Oryza sativa subsp. japonica (Rice).